Reading from the N-terminus, the 398-residue chain is Cathepsin E (398 aa).

The N-terminal stretch at 1–21 is a signal peptide; it reads MKPLFVLLLLLLLLDLAQAQG. Residues 22–58 constitute a propeptide, activation peptide; sequence VLHRVPLRRHQSLRKKLRAQGQLSDFWRSHNLDMIEF. The Peptidase A1 domain maps to 80–394; it reads YFGTVSIGSP…DRGNNQVGLA (315 aa). N-linked (GlcNAc...) asparagine glycosylation occurs at N92. The active site involves D98. 2 cysteine pairs are disulfide-bonded: C111/C116 and C274/C278. D283 is an active-site residue.

This sequence belongs to the peptidase A1 family. In terms of assembly, homodimer; disulfide-linked. Glycosylated. The nature of the carbohydrate chain varies between cell types. In brain microglia, the proenzyme contains a high mannose-type oligosaccharide, while the mature enzyme contains a complex-type oligosaccharide. In stomach and spleen, the mature enzyme contains a high mannose-type oligosaccharide. In erythrocyte membranes, the mature enzyme contains a complex-type oligosaccharide. In terms of tissue distribution, expressed abundantly in lymphocytes and macrophages of the thymus and spleen, and in the M cells of the intestine. In the brain, expression is limited to reactive microglial cells, the large pyrimidial neurons in the cerebral cortex, the CA1 and CA3 pyrimidial neurons of the hippocampus, the large neurons of the neostriatum, and the Purkinje neurons of the cerebellum.

The protein resides in the endosome. The enzyme catalyses Similar to cathepsin D, but slightly broader specificity.. May have a role in immune function. Probably involved in the processing of antigenic peptides during MHC class II-mediated antigen presentation. May play a role in activation-induced lymphocyte depletion in the thymus, and in neuronal degeneration and glial cell activation in the brain. The polypeptide is Cathepsin E (Ctse) (Rattus norvegicus (Rat)).